Consider the following 222-residue polypeptide: Probable pyridoxal 5'-phosphate synthase subunit SNO2 (222 aa).

58 to 60 is a binding site for L-glutamine; sequence GES. Cys91 acts as the Nucleophile in catalysis. L-glutamine-binding positions include Arg120 and 151–152; that span reads IR. Active-site charge relay system residues include His197 and Glu199.

It belongs to the glutaminase PdxT/SNO family.

The enzyme catalyses aldehydo-D-ribose 5-phosphate + D-glyceraldehyde 3-phosphate + L-glutamine = pyridoxal 5'-phosphate + L-glutamate + phosphate + 3 H2O + H(+). It carries out the reaction L-glutamine + H2O = L-glutamate + NH4(+). It functions in the pathway cofactor biosynthesis; pyridoxal 5'-phosphate biosynthesis. Functionally, catalyzes the hydrolysis of glutamine to glutamate and ammonia as part of the biosynthesis of pyridoxal 5'-phosphate. The resulting ammonia molecule is channeled to the active site of a SNZ isoform. The chain is Probable pyridoxal 5'-phosphate synthase subunit SNO2 (SNO2) from Saccharomyces cerevisiae (strain ATCC 204508 / S288c) (Baker's yeast).